The primary structure comprises 132 residues: Small ribosomal subunit protein uS11 (132 aa).

Positions 1–24 are disordered; that stretch reads MAAPKQAARKPRRRDRKSVPVGQA. Residues 7–16 show a composition bias toward basic residues; it reads AARKPRRRDR.

It belongs to the universal ribosomal protein uS11 family. In terms of assembly, part of the 30S ribosomal subunit. Interacts with proteins S7 and S18. Binds to IF-3.

Functionally, located on the platform of the 30S subunit, it bridges several disparate RNA helices of the 16S rRNA. Forms part of the Shine-Dalgarno cleft in the 70S ribosome. This Bifidobacterium longum (strain DJO10A) protein is Small ribosomal subunit protein uS11.